Reading from the N-terminus, the 489-residue chain is Mitochondrial distribution and morphology protein 10 (489 aa).

The protein belongs to the MDM10 family. In terms of assembly, component of the ER-mitochondria encounter structure (ERMES) or MDM complex, composed of MMM1, MDM10, MDM12 and MDM34. Associates with the mitochondrial outer membrane sorting assembly machinery SAM(core) complex.

Its subcellular location is the mitochondrion outer membrane. Functionally, component of the ERMES/MDM complex, which serves as a molecular tether to connect the endoplasmic reticulum and mitochondria. Components of this complex are involved in the control of mitochondrial shape and protein biogenesis and may function in phospholipid exchange. MDM10 is involved in the late assembly steps of the general translocase of the mitochondrial outer membrane (TOM complex). Functions in the TOM40-specific route of the assembly of outer membrane beta-barrel proteins, including the association of TOM40 with the receptor TOM22 and small TOM proteins. Can associate with the SAM(core) complex as well as the MDM12-MMM1 complex, both involved in late steps of the major beta-barrel assembly pathway, that is responsible for biogenesis of all outer membrane beta-barrel proteins. May act as a switch that shuttles between both complexes and channels precursor proteins into the TOM40-specific pathway. Plays a role in mitochondrial morphology and in the inheritance of mitochondria. The sequence is that of Mitochondrial distribution and morphology protein 10 from Arthroderma otae (strain ATCC MYA-4605 / CBS 113480) (Microsporum canis).